A 49-amino-acid polypeptide reads, in one-letter code: Large ribosomal subunit protein bL33 (49 aa).

Belongs to the bacterial ribosomal protein bL33 family.

This Syntrophomonas wolfei subsp. wolfei (strain DSM 2245B / Goettingen) protein is Large ribosomal subunit protein bL33.